A 151-amino-acid chain; its full sequence is uncharacterized protein (151 aa).

The region spanning 6-143 (MKTLSAGIIF…QWQYVMGPSL (138 aa)) is the Nudix hydrolase domain.

This is an uncharacterized protein from Escherichia coli (Bacteriophage T4).